An 87-amino-acid polypeptide reads, in one-letter code: Kappa-2-bungarotoxin (87 aa).

The first 21 residues, 1 to 21 (MKTLLLTLVVVTIVCLDLGYT), serve as a signal peptide directing secretion. Intrachain disulfides connect Cys24-Cys42, Cys35-Cys63, Cys48-Cys52, Cys67-Cys79, and Cys80-Cys85.

It belongs to the three-finger toxin family. Long-chain subfamily. Kappa-neurotoxin sub-subfamily. Homodimer and heterodimer with kappa 3-bungarotoxin; non-covalently linked. As to expression, expressed by the venom gland.

The protein localises to the secreted. Its function is as follows. Postsynaptic neurotoxin that binds and inhibits neuronal nicotinic acetylcholine receptors (nAChR) with high affinity (IC(50)&lt;100 nM). Is a selective, and slowly reversible antagonist of alpha-3/CHRNA3-containing and some alpha-4/CHRNA4-containing AChRs. The polypeptide is Kappa-2-bungarotoxin (Bungarus multicinctus (Many-banded krait)).